The primary structure comprises 329 residues: NADH-quinone oxidoreductase subunit H (329 aa).

9 helical membrane passes run 9–29, 42–62, 75–95, 117–137, 154–174, 188–208, 238–258, 269–291, and 309–329; these read LIKI…ATYI, GPCY…IKLF, FIFT…MAPI, IGFL…ILAG, IQLL…LMVV, GGFL…FLIA, LKWG…SFVI, WGFI…LSMW, and WKIM…IILI.

This sequence belongs to the complex I subunit 1 family. NDH-1 is composed of 14 different subunits. Subunits NuoA, H, J, K, L, M, N constitute the membrane sector of the complex.

The protein localises to the cell inner membrane. It carries out the reaction a quinone + NADH + 5 H(+)(in) = a quinol + NAD(+) + 4 H(+)(out). Its function is as follows. NDH-1 shuttles electrons from NADH, via FMN and iron-sulfur (Fe-S) centers, to quinones in the respiratory chain. The immediate electron acceptor for the enzyme in this species is believed to be ubiquinone. Couples the redox reaction to proton translocation (for every two electrons transferred, four hydrogen ions are translocated across the cytoplasmic membrane), and thus conserves the redox energy in a proton gradient. This subunit may bind ubiquinone. In Helicobacter pylori (strain ATCC 700392 / 26695) (Campylobacter pylori), this protein is NADH-quinone oxidoreductase subunit H.